Consider the following 562-residue polypeptide: Sensor histidine kinase MtrB (562 aa).

The next 2 helical transmembrane spans lie at 42–62 (VVAL…FVLT) and 213–233 (GTMA…ALLV). The region spanning 235 to 287 (RQVVVPVRSASRIAERFAEGHLSERMPVRGEDDMARLAVSFNDMAESLSRQIT) is the HAMP domain. The region spanning 302–519 (DVSHELRTPL…CFRLTLPLVR (218 aa)) is the Histidine kinase domain. The segment at 526 to 562 (SPLPMKPILQPSPQASTAGQQHGTQRQRLREHAERSR) is disordered. Residues 536–551 (PSPQASTAGQQHGTQR) are compositionally biased toward polar residues. Over residues 553 to 562 (RLREHAERSR) the composition is skewed to basic and acidic residues.

It is found in the cell membrane. It catalyses the reaction ATP + protein L-histidine = ADP + protein N-phospho-L-histidine.. Functionally, member of the two-component regulatory system MtrA/MtrB. Seems to function as a membrane-associated protein kinase that phosphorylates MtrA in response to environmental signals. This chain is Sensor histidine kinase MtrB (mtrB), found in Mycobacterium leprae (strain TN).